The chain runs to 173 residues: Translocon-associated protein subunit delta (173 aa).

The signal sequence occupies residues 1-23; it reads MAAMASFGALALLLLSGLSCCSA. Topologically, residues 24 to 144 are lumenal; sequence EACLEPQITP…SVDHRGTWNG (121 aa). Cys26 and Cys57 form a disulfide bridge. Residue Lys73 forms a Glycyl lysine isopeptide (Lys-Gly) (interchain with G-Cter in ubiquitin) linkage. A helical transmembrane segment spans residues 145–165; the sequence is PWVSTEVLAAAIGIVIYYLAF. Residues 166–173 are Cytoplasmic-facing; sequence SAKSHIQA.

The protein belongs to the TRAP-delta family. In terms of assembly, heterotetramer of TRAP-alpha, TRAP-beta, TRAP-delta and TRAP-gamma.

It is found in the endoplasmic reticulum membrane. TRAP proteins are part of a complex whose function is to bind calcium to the ER membrane and thereby regulate the retention of ER resident proteins. This Rattus norvegicus (Rat) protein is Translocon-associated protein subunit delta (Ssr4).